The primary structure comprises 208 residues: MPGRFITLEGGEGVGKSTQAKALAAALRARGLDVVETREPGGSDGAEAIRRLLLEGAADRWNARAEALLFAAARADHVARTIRPAIEAGRWVVCDRFLDSSIAYQGGADGLGDEAIRTLHAIGSAGYLPDRTLLLDMPVFDAAFRQAEAGIANSDRFEKRDEAFHDRVADSFRRIAAQEPARIRTINAQGSPQEVTARLIEALADLLP.

10 to 17 (GGEGVGKS) contacts ATP.

It belongs to the thymidylate kinase family.

It carries out the reaction dTMP + ATP = dTDP + ADP. Functionally, phosphorylation of dTMP to form dTDP in both de novo and salvage pathways of dTTP synthesis. The chain is Thymidylate kinase from Rhizorhabdus wittichii (strain DSM 6014 / CCUG 31198 / JCM 15750 / NBRC 105917 / EY 4224 / RW1) (Sphingomonas wittichii).